The following is a 495-amino-acid chain: Hydroxyneurosporene desaturase (495 aa).

It belongs to the carotenoid/retinoid oxidoreductase family.

It catalyses the reaction rhodopin + A = (3E)-3,4-didehydrorhodopin + AH2. It participates in carotenoid biosynthesis; spheroidene biosynthesis. Catalyzes the introduction of C-3,4 double bonds into 1-hydroxyneurosporene (1-HO-Neu) to yield demethylspheroidene (DMS). It prefer the acyclic carotenoids such as 1-hydroxylycopene, and 1-hydroxy-gamma-carotene, whereas 1-hydroxy-3,4-didehydrolycopene and 1,1-dihydroxylycopene are much less effective. This Cereibacter sphaeroides (strain ATCC 17023 / DSM 158 / JCM 6121 / CCUG 31486 / LMG 2827 / NBRC 12203 / NCIMB 8253 / ATH 2.4.1.) (Rhodobacter sphaeroides) protein is Hydroxyneurosporene desaturase (crtD).